The following is a 560-amino-acid chain: Trans-activating transcriptional regulatory protein (560 aa).

Disordered regions lie at residues 1-25 (MPKN…LFNN) and 99-134 (TGAE…LVNK).

The protein belongs to the nucleopolyhedrovirus IE-1 protein family.

Functionally, regulatory transcriptional protein, which trans-activates gene expression from early baculovirus promoters. Can also trans-activate its own promoter, suggesting that it is autoregulated during normal infection of insect cells. The polypeptide is Trans-activating transcriptional regulatory protein (IE1) (Orgyia pseudotsugata (Douglas-fir tussock moth)).